Here is a 599-residue protein sequence, read N- to C-terminus: Kelch-like protein 41a (599 aa).

A BTB domain is found at 32–102; sequence VDCILKVGDR…LYSADIDITD (71 aa). Residues 137 to 239 enclose the BACK domain; sequence CLAIFRMGLV…PEKYLKEKVE (103 aa). 5 Kelch repeats span residues 339 to 391, 393 to 440, 441 to 488, 489 to 535, and 537 to 591; these read LLYV…EFEN, LFAV…SQNG, LVYC…VHKG, KIVV…SVDG, and LYAV…SMRL.

Its subcellular location is the cytoplasm. The protein localises to the cytoskeleton. It is found in the sarcoplasmic reticulum membrane. The protein resides in the endoplasmic reticulum membrane. In terms of biological role, involved in skeletal muscle development and differentiation. In Danio rerio (Zebrafish), this protein is Kelch-like protein 41a (klhl41a).